A 238-amino-acid polypeptide reads, in one-letter code: Pyridoxine 5'-phosphate synthase (238 aa).

A 3-amino-2-oxopropyl phosphate-binding site is contributed by Asn6. A 1-deoxy-D-xylulose 5-phosphate-binding site is contributed by 8–9; sequence DH. Arg17 is a binding site for 3-amino-2-oxopropyl phosphate. His42 functions as the Proton acceptor in the catalytic mechanism. 1-deoxy-D-xylulose 5-phosphate-binding residues include Arg44 and His49. Residue Glu69 is the Proton acceptor of the active site. Position 99 (Thr99) interacts with 1-deoxy-D-xylulose 5-phosphate. Catalysis depends on His186, which acts as the Proton donor. 3-amino-2-oxopropyl phosphate-binding positions include Gly187 and 208–209; that span reads GH.

This sequence belongs to the PNP synthase family. Homooctamer; tetramer of dimers.

The protein resides in the cytoplasm. It catalyses the reaction 3-amino-2-oxopropyl phosphate + 1-deoxy-D-xylulose 5-phosphate = pyridoxine 5'-phosphate + phosphate + 2 H2O + H(+). It participates in cofactor biosynthesis; pyridoxine 5'-phosphate biosynthesis; pyridoxine 5'-phosphate from D-erythrose 4-phosphate: step 5/5. Functionally, catalyzes the complicated ring closure reaction between the two acyclic compounds 1-deoxy-D-xylulose-5-phosphate (DXP) and 3-amino-2-oxopropyl phosphate (1-amino-acetone-3-phosphate or AAP) to form pyridoxine 5'-phosphate (PNP) and inorganic phosphate. The chain is Pyridoxine 5'-phosphate synthase from Anaplasma marginale (strain St. Maries).